Consider the following 176-residue polypeptide: Probable RNA-binding protein EIF1AD (176 aa).

Residues T5–D89 form the S1-like domain. Positions A117 to D128 are enriched in basic and acidic residues. The segment at A117 to K176 is disordered. Acidic residues predominate over residues D129 to D164. Residues Y166 to K176 are compositionally biased toward polar residues.

The protein belongs to the EIF1AD family.

The polypeptide is Probable RNA-binding protein EIF1AD (Caenorhabditis briggsae).